Consider the following 239-residue polypeptide: MTIYLPELIPSHSTVFPDIENALNNPDGLLIMGGDLSSKQLISAYQHGIFPWYSNGDPILWWSPSVRGVFFPEQFSPSKSLKKFFRKSNYNVTLNKATYQVIDLCASTRPKEETWIMPEMINAYKKLANLGYCHSVEVWNEDELIGGLYGLQIGQIFCGESMFSLQTNASKIALWKFCEHFVSFNGKLIDCQMMNPHLESLGAKEMKRCDFKTLLEELSTKSTIANCYLPQILGDNSLS.

It belongs to the L/F-transferase family.

The protein resides in the cytoplasm. It carries out the reaction N-terminal L-lysyl-[protein] + L-leucyl-tRNA(Leu) = N-terminal L-leucyl-L-lysyl-[protein] + tRNA(Leu) + H(+). The enzyme catalyses N-terminal L-arginyl-[protein] + L-leucyl-tRNA(Leu) = N-terminal L-leucyl-L-arginyl-[protein] + tRNA(Leu) + H(+). The catalysed reaction is L-phenylalanyl-tRNA(Phe) + an N-terminal L-alpha-aminoacyl-[protein] = an N-terminal L-phenylalanyl-L-alpha-aminoacyl-[protein] + tRNA(Phe). Functions in the N-end rule pathway of protein degradation where it conjugates Leu, Phe and, less efficiently, Met from aminoacyl-tRNAs to the N-termini of proteins containing an N-terminal arginine or lysine. The chain is Leucyl/phenylalanyl-tRNA--protein transferase from Aliivibrio fischeri (strain ATCC 700601 / ES114) (Vibrio fischeri).